A 272-amino-acid chain; its full sequence is Putative phosphoenolpyruvate synthase regulatory protein (272 aa).

ADP is bound at residue Gly152–Thr159.

This sequence belongs to the pyruvate, phosphate/water dikinase regulatory protein family. PSRP subfamily.

It catalyses the reaction [pyruvate, water dikinase] + ADP = [pyruvate, water dikinase]-phosphate + AMP + H(+). It carries out the reaction [pyruvate, water dikinase]-phosphate + phosphate + H(+) = [pyruvate, water dikinase] + diphosphate. In terms of biological role, bifunctional serine/threonine kinase and phosphorylase involved in the regulation of the phosphoenolpyruvate synthase (PEPS) by catalyzing its phosphorylation/dephosphorylation. The protein is Putative phosphoenolpyruvate synthase regulatory protein of Pseudomonas fluorescens (strain Pf0-1).